Consider the following 289-residue polypeptide: ATP synthase gamma chain (289 aa).

It belongs to the ATPase gamma chain family. F-type ATPases have 2 components, CF(1) - the catalytic core - and CF(0) - the membrane proton channel. CF(1) has five subunits: alpha(3), beta(3), gamma(1), delta(1), epsilon(1). CF(0) has three main subunits: a, b and c.

It is found in the cell inner membrane. Produces ATP from ADP in the presence of a proton gradient across the membrane. The gamma chain is believed to be important in regulating ATPase activity and the flow of protons through the CF(0) complex. The chain is ATP synthase gamma chain from Coxiella burnetii (strain Dugway 5J108-111).